A 758-amino-acid chain; its full sequence is Spastin (758 aa).

Residues methionine 1–histidine 99 form a disordered region. Residues methionine 1–proline 121 lie on the Cytoplasmic side of the membrane. The tract at residues methionine 1 to alanine 210 is required for localization to punctate cytoplasmic foci. Composition is skewed to low complexity over residues serine 8–glycine 29, arginine 43–serine 58, serine 66–proline 76, and threonine 85–proline 95. Positions isoleucine 122–tyrosine 142 form an intramembrane region, helical. Residues leucine 143 to isoleucine 758 are Cytoplasmic-facing. Composition is skewed to polar residues over residues serine 169–serine 180 and glutamine 189–glutamine 198. Residues serine 169–proline 221 form a disordered region. Residues methionine 208–isoleucine 758 are sufficient for interaction with microtubules and microtubule severing. In terms of domain architecture, MIT spans histidine 233–leucine 308. Disordered stretches follow at residues arginine 353–leucine 376 and asparagine 390–proline 454. Composition is skewed to polar residues over residues asparagine 390–glycine 406 and glutamine 425–proline 454. Residues asparagine 443–valine 455 form a required for interaction with microtubules region. An ATP-binding site is contributed by glycine 523 to threonine 530.

The protein belongs to the AAA ATPase family. Spastin subfamily. Homohexamer. The homohexamer is stabilized by ATP-binding. The homohexamer may adopt a ring conformation through which microtubules pass prior to being severed. Interacts with microtubules. Interacts with atl; may be involved in microtubule dynamics.

The protein localises to the membrane. The protein resides in the cytoplasm. Its subcellular location is the cytoskeleton. It is found in the microtubule organizing center. It localises to the centrosome. The protein localises to the chromosome. The protein resides in the lipid droplet. The enzyme catalyses n ATP + n H2O + a microtubule = n ADP + n phosphate + (n+1) alpha/beta tubulin heterodimers.. In terms of biological role, ATP-dependent microtubule severing protein. Stimulates microtubule minus-end depolymerization and poleward microtubule flux in the mitotic spindle. Regulates microtubule stability in the neuromuscular junction synapse. Involved in lipid metabolism by regulating the size and distribution of lipid droplets. Involved in axon regeneration by regulating microtubule severing. The sequence is that of Spastin from Drosophila yakuba (Fruit fly).